The sequence spans 124 residues: Non-specific lipid-transfer protein (124 aa).

The N-terminal stretch at 1–26 is a signal peptide; that stretch reads MANSGVMKLVCLVLACMVVAAPLAEA. Disulfide bonds link C30/C77, C40/C54, C55/C100, and C75/C114.

It belongs to the plant LTP family.

In terms of biological role, plant non-specific lipid-transfer proteins transfer phospholipids as well as galactolipids across membranes. May play a role in wax or cutin deposition in the cell walls of expanding epidermal cells and certain secretory tissues. The chain is Non-specific lipid-transfer protein from Macadamia integrifolia (Macadamia nut).